Consider the following 100-residue polypeptide: Urease subunit gamma (100 aa).

Belongs to the urease gamma subunit family. As to quaternary structure, heterotrimer of UreA (gamma), UreB (beta) and UreC (alpha) subunits. Three heterotrimers associate to form the active enzyme.

The protein resides in the cytoplasm. It catalyses the reaction urea + 2 H2O + H(+) = hydrogencarbonate + 2 NH4(+). Its pathway is nitrogen metabolism; urea degradation; CO(2) and NH(3) from urea (urease route): step 1/1. The chain is Urease subunit gamma from Teredinibacter turnerae (strain ATCC 39867 / T7901).